A 344-amino-acid chain; its full sequence is MLTARLSRPLSQLPRKTLNFSDRENGTRGSLLLYSAPFVPVGRRTYAASVDPVGSKAVLITGCDSGFGFSLAKHLHSEGFLVFAGCLMKDKGSDGVKELDSMKSDRLRTVQLNVCKSEEVDKAAEVIRSSLEDPEKGLWGLVNNAGISTFGDVEFTSMETYKEVAEVNLWGTVRVTKAFLPLIRRAKGRVVNISSMMGRMANVARSPYCITKFGVEAFSDCLRYEMHPLGVKVSVVEPGNFIAATSLYGGTERIQAIANKMWEELPEVVRQDYGRKYFDEKVARMESYCTSGSTDTSPVIKAVTHALTATTPYTRYHPMDYYWWLRMQIMTHFPGAISDRIYIH.

The transit peptide at 1-46 directs the protein to the mitochondrion; the sequence is MLTARLSRPLSQLPRKTLNFSDRENGTRGSLLLYSAPFVPVGRRTY. 59 to 83 contacts NAD(+); the sequence is LITGCDSGFGFSLAKHLHSEGFLVF. 2 positions are modified to N6-acetyllysine: Lys-73 and Lys-97. Lys-103 carries the post-translational modification N6-acetyllysine; alternate. Lys-103 is subject to N6-succinyllysine; alternate. N6-acetyllysine is present on Lys-177. Ser-195 contributes to the substrate binding site. Tyr-208 acts as the Proton acceptor in catalysis. Lys-212 is modified (N6-acetyllysine). Ser-219 carries an O-linked (GlcNAc) serine glycan. Phosphoserine is present on Ser-246. Lys-260 carries the N6-acetyllysine; alternate modification. Lys-260 carries the N6-succinyllysine; alternate modification. Position 281 is an N6-acetyllysine (Lys-281).

This sequence belongs to the short-chain dehydrogenases/reductases (SDR) family. Homotetramer.

It localises to the mitochondrion inner membrane. The protein resides in the mitochondrion matrix. The enzyme catalyses (R)-3-hydroxybutanoate + NAD(+) = acetoacetate + NADH + H(+). Its activity is regulated as follows. Requires phosphatidylcholine as an allosteric activator for enzymatic activity. The chain is D-beta-hydroxybutyrate dehydrogenase, mitochondrial from Bos taurus (Bovine).